A 123-amino-acid polypeptide reads, in one-letter code: uncharacterized protein (123 aa).

A run of 2 helical transmembrane segments spans residues 1-21 (MVLP…AVGC) and 103-123 (LESS…ILLF).

It is found in the membrane. This is an uncharacterized protein from Saccharomyces cerevisiae (strain ATCC 204508 / S288c) (Baker's yeast).